The sequence spans 449 residues: Heterogeneous nuclear ribonucleoprotein H2 (449 aa).

Position 1 is an N-acetylmethionine (M1). M2 bears the N-acetylmethionine; in Heterogeneous nuclear ribonucleoprotein H2, N-terminally processed mark. The RRM 1 domain maps to 11-90 (FVVKVRGLPW…RYVEVFKSNS (80 aa)). S23 bears the Phosphoserine mark. A Glycyl lysine isopeptide (Lys-Gly) (interchain with G-Cter in SUMO2) cross-link involves residue K35. S54 and S63 each carry phosphoserine. K87 participates in a covalent cross-link: Glycyl lysine isopeptide (Lys-Gly) (interchain with G-Cter in SUMO2). Residue S90 is modified to Phosphoserine. K98 is covalently cross-linked (Glycyl lysine isopeptide (Lys-Gly) (interchain with G-Cter in SUMO2)). The RRM 2 domain occupies 111-188 (GFVRLRGLPF…RYIEIFKSSR (78 aa)). Position 233 is a dimethylated arginine; alternate (R233). Position 233 is an omega-N-methylarginine; alternate (R233). One copy of the 1-1 repeat lies at 234–249 (GAYGGGYGGYDDYGGY). The tract at residues 234–433 (GAYGGGYGGY…YGGQSSMSGY (200 aa)) is 2 X 16 AA Gly-rich approximate repeats. Phosphotyrosine is present on Y246. The region spanning 289–364 (HCVHMRGLPY…RYVELFLNST (76 aa)) is the RRM 3 domain. S310 carries the post-translational modification Phosphoserine. Tandem repeats lie at residues 354–372 (HRYV…GGAY), 374–392 (HSYV…GGAY), and 418–433 (AGYG…MSGY). Residues 354–392 (HRYVELFLNSTAGTSGGAYDHSYVELFLNSTAGASGGAY) form a 2 X 19 AA perfect repeats region.

As to quaternary structure, component of a ribonucleoprotein complex containing mRNAs and RNA-binding proteins including DDX5, HNRNPH2 and SRSF1 as well as splicing regulator ARVCF. Interacts with TXNL4/DIM1.

The protein resides in the nucleus. It localises to the nucleoplasm. Its function is as follows. This protein is a component of the heterogeneous nuclear ribonucleoprotein (hnRNP) complexes which provide the substrate for the processing events that pre-mRNAs undergo before becoming functional, translatable mRNAs in the cytoplasm. Binds poly(RG). The chain is Heterogeneous nuclear ribonucleoprotein H2 (Hnrnph2) from Rattus norvegicus (Rat).